The chain runs to 501 residues: Dipeptide and tripeptide permease A (501 aa).

Residues 1–34 (MSTANNNQPESISMNAFKQPKAFYLIFSIELWER) are Cytoplasmic-facing. The helical transmembrane segment at 35–55 (FGYYGLQGIMAVYLVKMLGMS) threads the bilayer. Topologically, residues 56 to 59 (EADS) are periplasmic. Residues 60-80 (ITLFSSFSALVYGFVAIGGWL) form a helical membrane-spanning segment. At 81–89 (GDKVLGAKR) the chain is on the cytoplasmic side. Helical transmembrane passes span 90–110 (VIVL…YSGH) and 111–131 (EIFW…LFKA). At 132-153 (NPSSLLSTCYSKDDPRLDGAFT) the chain is on the periplasmic side. Residues 154-174 (MYYMSINIGSFFSMLATPWLA) form a helical membrane-spanning segment. Over 175–178 (AKYG) the chain is Cytoplasmic. A helical transmembrane segment spans residues 179-199 (WSVAFSLSVVGMLITLVNFWF). At 200–220 (CRKWVKNQGSKPDFLPLQFKK) the chain is on the periplasmic side. A helical transmembrane segment spans residues 221–241 (LLMVLVGIIALITLSNWLLHN). Residues 242 to 246 (QIIAR) are Cytoplasmic-facing. A helical membrane pass occupies residues 247–267 (WALALVSLGIIFIFTKETLFL). The Periplasmic segment spans residues 268–274 (QGIARRR). A helical transmembrane segment spans residues 275–295 (MIVAFLLMLEAVIFFVLYSQM). Topologically, residues 296 to 320 (PTSLNFFAIHNVEHSIFGIGFEPEQ) are cytoplasmic. Residues 321–341 (FQALNPFWIMLASPILAAIYN) traverse the membrane as a helical segment. Over 342-352 (KMGDRLPMPHK) the chain is Periplasmic. Residues 353–373 (FAFGMMLCSAAFLVLPWGASF) traverse the membrane as a helical segment. Topologically, residues 374 to 383 (ANEHGIVSVN) are cytoplasmic. Residues 384-404 (WLILSYALQSIGELMISGLGL) form a helical membrane-spanning segment. At 405-414 (AMVAQLVPQR) the chain is on the periplasmic side. A helical membrane pass occupies residues 415-435 (LMGFIMGSWFLTTAAAALIAG). Topologically, residues 436–460 (KVAALTAVPSDAITDAHASLAIYSH) are cytoplasmic. A helical membrane pass occupies residues 461–481 (VFMQIGIVTAIIAVLMMLTAP). Residues 482–501 (KLYRMTLAPSDHNDVKIMTQ) lie on the Periplasmic side of the membrane.

This sequence belongs to the major facilitator superfamily. Proton-dependent oligopeptide transporter (POT/PTR) (TC 2.A.17) family. DtpA subfamily.

The protein resides in the cell inner membrane. Proton-dependent permease that transports di- and tripeptides. The protein is Dipeptide and tripeptide permease A of Yersinia pestis.